Consider the following 810-residue polypeptide: Cation/H(+) antiporter 18 (810 aa).

Helical transmembrane passes span 29–49, 59–76, 91–111, 126–146, 157–177, 193–213, 223–243, 277–297, 314–334, 343–363, 374–394, and 406–426; these read FALPLAILQIVIVIVLTRVLA, RVIAEVIGGIMLGPSLLG, LTVLETLANLGLLFFLFLAGL, LGIALAGITLPFALGIGSSFV, STAFLVFMGVALSITAFPVLA, LAMSAAAVNDVAAWILLALAI, LVSLWVFLSGCAFVIGASFII, FITDAIGIHSMFGAFVVGVLI, LVSGLFLPLYFVASGLKTNVA, GLLVLVTATACFGKILGTLGV, AITLGFLMNTKGLVELIVLNI, and FAIMVLMALFTTFITTPVVMA. Ser804 bears the Phosphoserine mark.

The protein belongs to the monovalent cation:proton antiporter 2 (CPA2) transporter (TC 2.A.37) family. CHX (TC 2.A.37.4) subfamily. As to expression, expressed in roots.

The protein localises to the membrane. Its function is as follows. May operate as a cation/H(+) antiporter. This chain is Cation/H(+) antiporter 18 (CHX18), found in Arabidopsis thaliana (Mouse-ear cress).